Here is a 337-residue protein sequence, read N- to C-terminus: 1-aminocyclopropane-1-carboxylate deaminase (337 aa).

K50 is subject to N6-(pyridoxal phosphate)lysine. The active-site Nucleophile is the S77.

It belongs to the ACC deaminase/D-cysteine desulfhydrase family. As to quaternary structure, homotrimer. Requires pyridoxal 5'-phosphate as cofactor.

The enzyme catalyses 1-aminocyclopropane-1-carboxylate + H2O = 2-oxobutanoate + NH4(+). Functionally, catalyzes a cyclopropane ring-opening reaction, the irreversible conversion of 1-aminocyclopropane-1-carboxylate (ACC) to ammonia and alpha-ketobutyrate. Allows growth on ACC as a nitrogen source. This chain is 1-aminocyclopropane-1-carboxylate deaminase, found in Methylobacterium nodulans (strain LMG 21967 / CNCM I-2342 / ORS 2060).